A 57-amino-acid chain; its full sequence is Sec-independent protein translocase protein TatA (57 aa).

A helical transmembrane segment spans residues M1–T21. Residues G37–S57 are disordered. The segment covering D44 to S57 has biased composition (polar residues).

Belongs to the TatA/E family. In terms of assembly, the Tat system comprises two distinct complexes: a TatABC complex, containing multiple copies of TatA, TatB and TatC subunits, and a separate TatA complex, containing only TatA subunits. Substrates initially bind to the TatABC complex, which probably triggers association of the separate TatA complex to form the active translocon.

The protein resides in the cell inner membrane. In terms of biological role, part of the twin-arginine translocation (Tat) system that transports large folded proteins containing a characteristic twin-arginine motif in their signal peptide across membranes. TatA could form the protein-conducting channel of the Tat system. The sequence is that of Sec-independent protein translocase protein TatA from Stutzerimonas stutzeri (Pseudomonas stutzeri).